A 290-amino-acid polypeptide reads, in one-letter code: ATP synthase gamma chain (290 aa).

The protein belongs to the ATPase gamma chain family. F-type ATPases have 2 components, CF(1) - the catalytic core - and CF(0) - the membrane proton channel. CF(1) has five subunits: alpha(3), beta(3), gamma(1), delta(1), epsilon(1). CF(0) has three main subunits: a, b and c.

It is found in the cell inner membrane. Its function is as follows. Produces ATP from ADP in the presence of a proton gradient across the membrane. The gamma chain is believed to be important in regulating ATPase activity and the flow of protons through the CF(0) complex. This Amoebophilus asiaticus (strain 5a2) protein is ATP synthase gamma chain.